A 130-amino-acid chain; its full sequence is Large ribosomal subunit protein bL12 (130 aa).

It belongs to the bacterial ribosomal protein bL12 family. In terms of assembly, homodimer. Part of the ribosomal stalk of the 50S ribosomal subunit. Forms a multimeric L10(L12)X complex, where L10 forms an elongated spine to which 2 to 4 L12 dimers bind in a sequential fashion. Binds GTP-bound translation factors.

Forms part of the ribosomal stalk which helps the ribosome interact with GTP-bound translation factors. Is thus essential for accurate translation. The protein is Large ribosomal subunit protein bL12 of Mycobacterium bovis (strain ATCC BAA-935 / AF2122/97).